A 482-amino-acid chain; its full sequence is Glutamyl-tRNA(Gln) amidotransferase subunit A (482 aa).

Catalysis depends on charge relay system residues Lys81 and Ser156. Ser180 serves as the catalytic Acyl-ester intermediate.

It belongs to the amidase family. GatA subfamily. Heterotrimer of A, B and C subunits.

The enzyme catalyses L-glutamyl-tRNA(Gln) + L-glutamine + ATP + H2O = L-glutaminyl-tRNA(Gln) + L-glutamate + ADP + phosphate + H(+). Its function is as follows. Allows the formation of correctly charged Gln-tRNA(Gln) through the transamidation of misacylated Glu-tRNA(Gln) in organisms which lack glutaminyl-tRNA synthetase. The reaction takes place in the presence of glutamine and ATP through an activated gamma-phospho-Glu-tRNA(Gln). This Brachyspira hyodysenteriae (strain ATCC 49526 / WA1) protein is Glutamyl-tRNA(Gln) amidotransferase subunit A.